The sequence spans 508 residues: DNA-directed RNA polymerase subunit Rpo1C (508 aa).

Residues 1-123 (MIIWKDTAKN…REKYEYEKKV (123 aa)) are unknown. Residues 124–508 (SSQVLDVIAE…IYKGYPKTKK (385 aa)) are DNA-directed RNA polymerase subunit Rpo1C.

Belongs to the RNA polymerase beta' chain family. As to quaternary structure, part of the RNA polymerase complex.

It is found in the cytoplasm. The catalysed reaction is RNA(n) + a ribonucleoside 5'-triphosphate = RNA(n+1) + diphosphate. Functionally, DNA-dependent RNA polymerase (RNAP) catalyzes the transcription of DNA into RNA using the four ribonucleoside triphosphates as substrates. Forms part of the jaw domain. The polypeptide is DNA-directed RNA polymerase subunit Rpo1C (Thermoplasma volcanium (strain ATCC 51530 / DSM 4299 / JCM 9571 / NBRC 15438 / GSS1)).